Here is a 216-residue protein sequence, read N- to C-terminus: Ribosomal RNA small subunit methyltransferase G (216 aa).

S-adenosyl-L-methionine-binding positions include G73, L78, 124-125 (AE), and R139.

Belongs to the methyltransferase superfamily. RNA methyltransferase RsmG family.

It localises to the cytoplasm. In terms of biological role, specifically methylates the N7 position of guanine in position 518 of 16S rRNA. This is Ribosomal RNA small subunit methyltransferase G from Paenarthrobacter aurescens (strain TC1).